The following is a 492-amino-acid chain: MKTNYLILGVSTLISKNVGHISQIIGPVLDVTFPPGKMPNIYNSLIVRGQNPAGQEINVTCEVQQLLGNNKVRAVAMSATDGLTRGMKVTDTGAPLSVPVGEVTLGRIFNVLGEPVDNLGAIDVSTTFPIHRSAPAFTQLDTKLSIFETGIKVVDLLAPYRRGGKIGLFGGAGVGKTVLIMELINNIAKAHGGVSVFGGVGERTREGNDLYMEMKESKVINEQDISESKVALVYGQMNEPPGARMRVGLTALTMAEYFRDVNKQDVLLFIDNIFRFVQAGSEVSALLGRMPSAVGYQPTLSTEMGSLQERITSTKEGSITSIQAVYVPADDLTDPAPATTFAHLDATTVLSRGLAAKGIYPAVDPLDSTSTMLQPWIVGEEHYETAQGVKQTLQRYKELQDIIAILGLDELSEEDRLTVARARKIERFLSQPFFVAEVFTGSPGKYVSLIETIKGFQMILAGELDGLPEQAFYLVGNIDEVTAKAETLQMES.

170–177 (GGAGVGKT) provides a ligand contact to ATP.

The protein belongs to the ATPase alpha/beta chains family. As to quaternary structure, F-type ATPases have 2 components, CF(1) - the catalytic core - and CF(0) - the membrane proton channel. CF(1) has five subunits: alpha(3), beta(3), gamma(1), delta(1), epsilon(1). CF(0) has four main subunits: a(1), b(1), b'(1) and c(9-12).

It localises to the plastid. It is found in the chloroplast thylakoid membrane. It catalyses the reaction ATP + H2O + 4 H(+)(in) = ADP + phosphate + 5 H(+)(out). Its function is as follows. Produces ATP from ADP in the presence of a proton gradient across the membrane. The catalytic sites are hosted primarily by the beta subunits. This is ATP synthase subunit beta, chloroplastic from Anthoceros angustus (Hornwort).